Reading from the N-terminus, the 521-residue chain is Forkhead box protein N4 (521 aa).

Residues lysine 197–aspartate 293 constitute a DNA-binding region (fork-head). The segment at proline 371 to arginine 406 is disordered.

In terms of tissue distribution, mainly expressed in proliferator progenitor cells in brain and retina rather than differentiated cells. In contrast, is expressed only in postmitotic epithelial cells rather than in proliferative progenitors in the proximal airway.

It localises to the nucleus. In terms of biological role, transcription factor essential for neural and some non-neural tissues development, such as retina and lung respectively. Binds to an 11-bp consensus sequence containing the invariant tetranucleotide 5'-ACGC-3'. During development of the central nervous system, is required to specify the amacrine and horizontal cell fates from multipotent retinal progenitors while suppressing the alternative photoreceptor cell fates through activating DLL4-NOTCH signaling. Also acts synergistically with ASCL1/MASH1 to activate DLL4-NOTCH signaling and drive commitment of p2 progenitors to the V2b interneuron fates during spinal cord neurogenesis. In development of non-neural tissues, plays an essential role in the specification of the atrioventricular canal and is indirectly required for patterning the distal airway during lung development. The protein is Forkhead box protein N4 (Foxn4) of Mus musculus (Mouse).